Reading from the N-terminus, the 551-residue chain is HTH-type transcriptional regulator SgrR (551 aa).

Residues 1-116 (MPSARLQQQF…LVSHLGRSFR (116 aa)) enclose the HTH marR-type domain. The segment at residues 26–49 (LNELAALLSCSRRHMRTLLNTMQD) is a DNA-binding region (H-T-H motif). The solute-binding stretch occupies residues 163-492 (ELEADIAHHW…IDWQADAARW (330 aa)).

Activates the small RNA gene sgrS under glucose-phosphate stress conditions as well as yfdZ. Represses its own transcription under both stress and non-stress conditions. Might act as a sensor of the intracellular accumulation of phosphoglucose by binding these molecules in its C-terminal solute-binding domain. This chain is HTH-type transcriptional regulator SgrR, found in Shigella boydii serotype 4 (strain Sb227).